The sequence spans 346 residues: tRNA N6-adenosine threonylcarbamoyltransferase (346 aa).

Positions 111 and 115 each coordinate Fe cation. Substrate-binding positions include 134-138, D167, G180, D184, and N279; that span reads LVSGG. D307 is a binding site for Fe cation.

The protein belongs to the KAE1 / TsaD family. It depends on Fe(2+) as a cofactor.

The protein localises to the cytoplasm. The enzyme catalyses L-threonylcarbamoyladenylate + adenosine(37) in tRNA = N(6)-L-threonylcarbamoyladenosine(37) in tRNA + AMP + H(+). Its function is as follows. Required for the formation of a threonylcarbamoyl group on adenosine at position 37 (t(6)A37) in tRNAs that read codons beginning with adenine. Is involved in the transfer of the threonylcarbamoyl moiety of threonylcarbamoyl-AMP (TC-AMP) to the N6 group of A37, together with TsaE and TsaB. TsaD likely plays a direct catalytic role in this reaction. The sequence is that of tRNA N6-adenosine threonylcarbamoyltransferase from Gloeothece citriformis (strain PCC 7424) (Cyanothece sp. (strain PCC 7424)).